Here is a 640-residue protein sequence, read N- to C-terminus: Threonine--tRNA ligase (640 aa).

A TGS domain is found at 1–61 (MLVVTLPDGS…DKDSQLAIIT (61 aa)). The tract at residues 242–533 (DHRRLGKQLD…LIENHTGNMP (292 aa)) is catalytic. Residues cysteine 333, histidine 384, and histidine 510 each coordinate Zn(2+).

Belongs to the class-II aminoacyl-tRNA synthetase family. Homodimer. Zn(2+) is required as a cofactor.

The protein localises to the cytoplasm. The enzyme catalyses tRNA(Thr) + L-threonine + ATP = L-threonyl-tRNA(Thr) + AMP + diphosphate + H(+). Its function is as follows. Catalyzes the attachment of threonine to tRNA(Thr) in a two-step reaction: L-threonine is first activated by ATP to form Thr-AMP and then transferred to the acceptor end of tRNA(Thr). Also edits incorrectly charged L-seryl-tRNA(Thr). The protein is Threonine--tRNA ligase of Polynucleobacter necessarius subsp. necessarius (strain STIR1).